Reading from the N-terminus, the 557-residue chain is NADH-quinone oxidoreductase subunit C/D (557 aa).

Acidic residues predominate over residues 1–13; sequence MSLEEQQSDDPAE. The interval 1–20 is disordered; that stretch reads MSLEEQQSDDPAELESGVSR. The NADH dehydrogenase I subunit C stretch occupies residues 1 to 174; sequence MSLEEQQSDD…ATLREHANPL (174 aa). Positions 184-557 are NADH dehydrogenase I subunit D; sequence NTMYINIGPH…LDIVLGEVDR (374 aa). A Glycyl lysine isopeptide (Lys-Gly) (interchain with G-Cter in SAMP2) cross-link involves residue lysine 517.

It in the N-terminal section; belongs to the complex I 30 kDa subunit family. This sequence in the C-terminal section; belongs to the complex I 49 kDa subunit family. As to quaternary structure, NDH-1 is composed of 13 different subunits. Subunits NuoB, CD, E, F, and G constitute the peripheral sector of the complex.

It is found in the cell membrane. It catalyses the reaction a quinone + NADH + 5 H(+)(in) = a quinol + NAD(+) + 4 H(+)(out). Functionally, NDH-1 shuttles electrons from NADH, via FMN and iron-sulfur (Fe-S) centers, to quinones in the respiratory chain. Couples the redox reaction to proton translocation (for every two electrons transferred, four hydrogen ions are translocated across the cytoplasmic membrane), and thus conserves the redox energy in a proton gradient. In Haloferax volcanii (strain ATCC 29605 / DSM 3757 / JCM 8879 / NBRC 14742 / NCIMB 2012 / VKM B-1768 / DS2) (Halobacterium volcanii), this protein is NADH-quinone oxidoreductase subunit C/D (nuoCD).